Consider the following 124-residue polypeptide: Small ribosomal subunit protein uS13 (124 aa).

Residues glycine 95–arginine 124 are disordered. Polar residues predominate over residues glycine 100–serine 109. A compositionally biased stretch (basic residues) spans lysine 111 to arginine 124.

The protein belongs to the universal ribosomal protein uS13 family. In terms of assembly, part of the 30S ribosomal subunit. Forms a loose heterodimer with protein S19. Forms two bridges to the 50S subunit in the 70S ribosome.

In terms of biological role, located at the top of the head of the 30S subunit, it contacts several helices of the 16S rRNA. In the 70S ribosome it contacts the 23S rRNA (bridge B1a) and protein L5 of the 50S subunit (bridge B1b), connecting the 2 subunits; these bridges are implicated in subunit movement. Contacts the tRNAs in the A and P-sites. This is Small ribosomal subunit protein uS13 from Tropheryma whipplei (strain TW08/27) (Whipple's bacillus).